Here is a 364-residue protein sequence, read N- to C-terminus: tRNA 2-selenouridine synthase (364 aa).

The region spanning 14 to 137 (LIADTPIIDV…LRQTAIQATI (124 aa)) is the Rhodanese domain. C97 acts as the S-selanylcysteine intermediate in catalysis.

It belongs to the SelU family. Monomer.

The enzyme catalyses 5-methylaminomethyl-2-thiouridine(34) in tRNA + selenophosphate + (2E)-geranyl diphosphate + H2O + H(+) = 5-methylaminomethyl-2-selenouridine(34) in tRNA + (2E)-thiogeraniol + phosphate + diphosphate. The catalysed reaction is 5-methylaminomethyl-2-thiouridine(34) in tRNA + (2E)-geranyl diphosphate = 5-methylaminomethyl-S-(2E)-geranyl-thiouridine(34) in tRNA + diphosphate. It carries out the reaction 5-methylaminomethyl-S-(2E)-geranyl-thiouridine(34) in tRNA + selenophosphate + H(+) = 5-methylaminomethyl-2-(Se-phospho)selenouridine(34) in tRNA + (2E)-thiogeraniol. It catalyses the reaction 5-methylaminomethyl-2-(Se-phospho)selenouridine(34) in tRNA + H2O = 5-methylaminomethyl-2-selenouridine(34) in tRNA + phosphate. Its function is as follows. Involved in the post-transcriptional modification of the uridine at the wobble position (U34) of tRNA(Lys), tRNA(Glu) and tRNA(Gln). Catalyzes the conversion of 2-thiouridine (S2U-RNA) to 2-selenouridine (Se2U-RNA). Acts in a two-step process involving geranylation of 2-thiouridine (S2U) to S-geranyl-2-thiouridine (geS2U) and subsequent selenation of the latter derivative to 2-selenouridine (Se2U) in the tRNA chain. The sequence is that of tRNA 2-selenouridine synthase from Shigella dysenteriae serotype 1 (strain Sd197).